Reading from the N-terminus, the 20-residue chain is Ferric reductase A (20 aa).

As to quaternary structure, monomer.

It carries out the reaction 2 a Fe(II)-siderophore + NAD(+) + H(+) = 2 a Fe(III)-siderophore + NADH. Its function is as follows. Reductase activity that acts on Fe(3+)-chelates and NADH as an electron donor and requires the presence of FMN for full activity. May play a role in iron uptake. This is Ferric reductase A (ferA) from Paracoccus denitrificans.